A 111-amino-acid chain; its full sequence is Large ribosomal subunit protein uL22 (111 aa).

Belongs to the universal ribosomal protein uL22 family. As to quaternary structure, part of the 50S ribosomal subunit.

Its function is as follows. This protein binds specifically to 23S rRNA; its binding is stimulated by other ribosomal proteins, e.g. L4, L17, and L20. It is important during the early stages of 50S assembly. It makes multiple contacts with different domains of the 23S rRNA in the assembled 50S subunit and ribosome. Functionally, the globular domain of the protein is located near the polypeptide exit tunnel on the outside of the subunit, while an extended beta-hairpin is found that lines the wall of the exit tunnel in the center of the 70S ribosome. This Acidithiobacillus ferrooxidans (strain ATCC 23270 / DSM 14882 / CIP 104768 / NCIMB 8455) (Ferrobacillus ferrooxidans (strain ATCC 23270)) protein is Large ribosomal subunit protein uL22.